Consider the following 598-residue polypeptide: Insulin-like growth factor 2 mRNA-binding protein 1 (598 aa).

RRM domains lie at 2 to 75 and 81 to 156; these read NKLY…HSVP and RKLQ…YIPD. A disordered region spans residues 155–195; it reads PDENSEVDSQRGPDNGRRPGYGPRGTSRQMSPGSGIPSKHQ. Residues 162–171 show a composition bias toward basic and acidic residues; the sequence is DSQRGPDNGR. Ser185 is subject to Phosphoserine. 2 consecutive KH domains span residues 198–263 and 279–346; these read DIPL…CRMI and EVPL…EQEI. Tyr399 bears the Phosphotyrosine mark. KH domains follow at residues 407 to 472 and 489 to 555; these read QETV…QGRI and KLET…QRKI. The segment at 561 to 598 is disordered; sequence QVKQQQKGGGMGTPQGPHPQGMTELGSPQGLAQEPRRK. Phosphothreonine is present on residues Thr573 and Thr583. A compositionally biased stretch (low complexity) spans 574–583; it reads PQGPHPQGMT. Ser587 is subject to Phosphoserine.

The protein belongs to the RRM IMP/VICKZ family. Component of the CRD-mediated complex.

It localises to the nucleus. The protein resides in the cytoplasm. It is found in the perinuclear region. The protein localises to the P-body. Its subcellular location is the stress granule. It localises to the cell projection. The protein resides in the growth cone. It is found in the filopodium. The protein localises to the lamellipodium. Functionally, RNA-binding factor that recruits target transcripts to cytoplasmic protein-RNA complexes (mRNPs). This transcript 'caging' into mRNPs allows mRNA transport and transient storage. It also modulates the rate and location at which target transcripts encounter the translational apparatus and shields them from endonuclease attacks or microRNA-mediated degradation. Preferentially binds to N6-methyladenosine (m6A)-containing mRNAs and increases their stability. Plays a direct role in the transport and translation of transcripts required for axonal regeneration in adult sensory neurons. Regulates localized beta-actin/ACTB mRNA translation in polarized cells, a crucial process for cell migration and neurite outgrowth. Promotes the directed movement of cells by fine-tuning intracellular signaling networks and enhances the velocity of cell migration. This chain is Insulin-like growth factor 2 mRNA-binding protein 1 (igf2bp1), found in Danio rerio (Zebrafish).